Here is a 332-residue protein sequence, read N- to C-terminus: Ribosomal RNA small subunit methyltransferase H (332 aa).

Residues 36–38 (GGH), aspartate 61, phenylalanine 88, aspartate 114, and glutamine 121 contribute to the S-adenosyl-L-methionine site.

This sequence belongs to the methyltransferase superfamily. RsmH family.

It is found in the cytoplasm. The enzyme catalyses cytidine(1402) in 16S rRNA + S-adenosyl-L-methionine = N(4)-methylcytidine(1402) in 16S rRNA + S-adenosyl-L-homocysteine + H(+). Functionally, specifically methylates the N4 position of cytidine in position 1402 (C1402) of 16S rRNA. The chain is Ribosomal RNA small subunit methyltransferase H from Pelodictyon phaeoclathratiforme (strain DSM 5477 / BU-1).